Here is a 296-residue protein sequence, read N- to C-terminus: 4-diphosphocytidyl-2-C-methyl-D-erythritol kinase (296 aa).

Residue lysine 13 is part of the active site. Position 104 to 114 (104 to 114 (PMGGGIGGGSS)) interacts with ATP. Aspartate 146 is an active-site residue.

The protein belongs to the GHMP kinase family. IspE subfamily.

It catalyses the reaction 4-CDP-2-C-methyl-D-erythritol + ATP = 4-CDP-2-C-methyl-D-erythritol 2-phosphate + ADP + H(+). Its pathway is isoprenoid biosynthesis; isopentenyl diphosphate biosynthesis via DXP pathway; isopentenyl diphosphate from 1-deoxy-D-xylulose 5-phosphate: step 3/6. In terms of biological role, catalyzes the phosphorylation of the position 2 hydroxy group of 4-diphosphocytidyl-2C-methyl-D-erythritol. The chain is 4-diphosphocytidyl-2-C-methyl-D-erythritol kinase from Hahella chejuensis (strain KCTC 2396).